The following is a 288-amino-acid chain: Sulfhydrogenase 2 subunit gamma (288 aa).

Positions 4–103 (YRSYDARIIE…RGPYGNGFPM (100 aa)) constitute an FAD-binding FR-type domain. 4 residues coordinate [2Fe-2S] cluster: Cys-250, Cys-255, Cys-258, and Cys-270.

In terms of assembly, dimer of heterotetramer of alpha, beta, gamma and delta subunits. The nickel-containing alpha and delta subunits constitute the hydrogenase activity. The beta and gamma subunits (flavin-containing dimer) constitute the sulfur reductase activity. It depends on FAD as a cofactor. [2Fe-2S] cluster is required as a cofactor.

The protein resides in the cytoplasm. It catalyses the reaction n sulfur + H2 = (n-1) sulfur + hydrogen sulfide + H(+). Its function is as follows. Part of a bifunctional enzyme complex that functions as a hydrogen-evolving hydrogenase with sulfur-reducing activity. May play a role in hydrogen cycling during fermentative growth. Activity exhibited with NAD in addition to NADPH. The beta and gamma subunits form the sulfur-reducing component that catalyzes the cytoplasmic production of hydrogen sulfide in the presence of elemental sulfur. The polypeptide is Sulfhydrogenase 2 subunit gamma (Pyrococcus furiosus (strain ATCC 43587 / DSM 3638 / JCM 8422 / Vc1)).